The chain runs to 353 residues: Ig alpha-1 chain C region (353 aa).

Residues 6-98 (PKVFPLSLCS…HYTNPSQDVT (93 aa)) form the Ig-like 1 domain. Cystine bridges form between cysteine 26–cysteine 85 and cysteine 77–cysteine 101. The segment at 96–121 (DVTVPCRVPSTPPTPSPSTPPTPSPP) is disordered. Residues 105 to 121 (STPPTPSPSTPPTPSPP) show a composition bias toward pro residues. 3 disulfide bridges follow: cysteine 123/cysteine 180, cysteine 147/cysteine 204, and cysteine 250/cysteine 313. Ig-like domains are found at residues 125-220 (PRLS…ATLS) and 228-330 (PEVH…KTID). The N-linked (GlcNAc...) asparagine glycan is linked to asparagine 144. The N-linked (GlcNAc...) asparagine glycan is linked to asparagine 340. A 3-hydroxy-L-kynurenine-binding site is contributed by cysteine 352.

In terms of assembly, monomeric or polymeric. 3-Hydroxykynurenine, an oxidized tryptophan metabolite that is common in biological fluids, reacts with alpha-1-microglobulin to form heterogeneous polycyclic chromophores including hydroxanthommatin. The chromophore reacts with accessible cysteines forming non-reducible thioether cross-links with Ig alpha-1 chain C region Cys-352.

Ig alpha is the major immunoglobulin class in body secretions. It may serve both to defend against local infection and to prevent access of foreign antigens to the general immunologic system. This is Ig alpha-1 chain C region (IGHA1) from Gorilla gorilla gorilla (Western lowland gorilla).